The following is a 382-amino-acid chain: 1-deoxy-D-xylulose 5-phosphate reductoisomerase (382 aa).

Residues Thr-10, Gly-11, Ser-12, Ile-13, Asn-38, and Asn-120 each contribute to the NADPH site. Lys-121 contributes to the 1-deoxy-D-xylulose 5-phosphate binding site. An NADPH-binding site is contributed by Glu-122. Residue Asp-146 coordinates Mn(2+). Ser-147, Glu-148, Ser-172, and His-195 together coordinate 1-deoxy-D-xylulose 5-phosphate. Residue Glu-148 coordinates Mn(2+). Gly-201 lines the NADPH pocket. 1-deoxy-D-xylulose 5-phosphate is bound by residues Ser-208, Asn-213, Lys-214, and Glu-217. Glu-217 is a Mn(2+) binding site.

It belongs to the DXR family. Requires Mg(2+) as cofactor. The cofactor is Mn(2+).

The catalysed reaction is 2-C-methyl-D-erythritol 4-phosphate + NADP(+) = 1-deoxy-D-xylulose 5-phosphate + NADPH + H(+). The protein operates within isoprenoid biosynthesis; isopentenyl diphosphate biosynthesis via DXP pathway; isopentenyl diphosphate from 1-deoxy-D-xylulose 5-phosphate: step 1/6. Functionally, catalyzes the NADPH-dependent rearrangement and reduction of 1-deoxy-D-xylulose-5-phosphate (DXP) to 2-C-methyl-D-erythritol 4-phosphate (MEP). This Caldanaerobacter subterraneus subsp. tengcongensis (strain DSM 15242 / JCM 11007 / NBRC 100824 / MB4) (Thermoanaerobacter tengcongensis) protein is 1-deoxy-D-xylulose 5-phosphate reductoisomerase.